The sequence spans 197 residues: Small ribosomal subunit protein uS4B (197 aa).

In terms of domain architecture, S4 RNA-binding spans Cys-88–Phe-151.

This sequence belongs to the universal ribosomal protein uS4 family. Part of the 30S ribosomal subunit. Contacts protein S5. The interaction surface between S4 and S5 is involved in control of translational fidelity.

Its function is as follows. One of the primary rRNA binding proteins, it binds directly to 16S rRNA where it nucleates assembly of the body of the 30S subunit. In terms of biological role, with S5 and S12 plays an important role in translational accuracy. The chain is Small ribosomal subunit protein uS4B from Clostridium botulinum (strain Hall / ATCC 3502 / NCTC 13319 / Type A).